The primary structure comprises 178 residues: Phosphopantetheine adenylyltransferase (178 aa).

Substrate is bound at residue Thr17. ATP is bound by residues Thr17 to Phe18 and His25. Substrate-binding residues include Lys49, Leu86, and Arg100. ATP-binding positions include Gly101 to Arg103, Glu111, and Leu136 to Arg142.

Belongs to the bacterial CoaD family. As to quaternary structure, homohexamer. The cofactor is Mg(2+).

Its subcellular location is the cytoplasm. It carries out the reaction (R)-4'-phosphopantetheine + ATP + H(+) = 3'-dephospho-CoA + diphosphate. The protein operates within cofactor biosynthesis; coenzyme A biosynthesis; CoA from (R)-pantothenate: step 4/5. Functionally, reversibly transfers an adenylyl group from ATP to 4'-phosphopantetheine, yielding dephospho-CoA (dPCoA) and pyrophosphate. This Zymomonas mobilis subsp. mobilis (strain ATCC 31821 / ZM4 / CP4) protein is Phosphopantetheine adenylyltransferase.